The sequence spans 663 residues: Translation factor GUF1 homolog, mitochondrial (663 aa).

In terms of domain architecture, tr-type G spans 64-250 (EKIRNFSIIA…AVIERIPPPP (187 aa)). GTP-binding positions include 73-80 (AHIDHGKS), 143-147 (DTPGH), and 197-200 (NKID).

This sequence belongs to the TRAFAC class translation factor GTPase superfamily. Classic translation factor GTPase family. LepA subfamily.

It is found in the mitochondrion inner membrane. It catalyses the reaction GTP + H2O = GDP + phosphate + H(+). Functionally, promotes mitochondrial protein synthesis. May act as a fidelity factor of the translation reaction, by catalyzing a one-codon backward translocation of tRNAs on improperly translocated ribosomes. Binds to mitochondrial ribosomes in a GTP-dependent manner. The protein is Translation factor GUF1 homolog, mitochondrial of Arabidopsis thaliana (Mouse-ear cress).